We begin with the raw amino-acid sequence, 621 residues long: Transmembrane protein 200C (621 aa).

The tract at residues 12 to 37 is disordered; the sequence is ARKQDPLRPPSQIPKRKRKAKKRRKN. Basic residues predominate over residues 25 to 36; sequence PKRKRKAKKRRK. A helical transmembrane segment spans residues 53–73; the sequence is GLIALCGILVLLVGIAMAVVG. The interval 80-147 is disordered; that stretch reads GTNREGGKQL…RAASPSSSST (68 aa). Residues 125 to 147 show a composition bias toward low complexity; sequence SSSAGAPRSTPPARAASPSSSST. The helical transmembrane segment at 167-187 threads the bilayer; sequence VFGPLIMGIGIFLFICANAVL. Disordered stretches follow at residues 284-315, 347-368, and 384-598; these read WPPH…PREP, ASSC…QSTA, and LQGG…FTNK. Residues 290–303 show a composition bias toward low complexity; it reads APSGGRPRGAASPP. Positions 405–418 are enriched in basic and acidic residues; it reads PGERGSQEIPRGEL. Over residues 479 to 490 the composition is skewed to pro residues; that stretch reads RAPPSPEPPPSP. 2 stretches are compositionally biased toward low complexity: residues 491–505 and 523–533; these read GSAD…KAAS and GSSQSDDPSSS. Residues 586–595 are compositionally biased toward polar residues; the sequence is EQPQPVQRQF.

This sequence belongs to the TMEM200 family.

Its subcellular location is the membrane. The protein is Transmembrane protein 200C (TMEM200C) of Homo sapiens (Human).